The sequence spans 334 residues: ADP-L-glycero-D-manno-heptose-6-epimerase (334 aa).

NADP(+) is bound by residues 11–12 (FI), 32–33 (DN), lysine 39, lysine 54, 77–81 (QGACS), and asparagine 94. Tyrosine 141 (proton acceptor) is an active-site residue. Lysine 145 is a binding site for NADP(+). Asparagine 171 is a binding site for substrate. NADP(+) contacts are provided by valine 172 and lysine 180. Lysine 180 (proton acceptor) is an active-site residue. Substrate is bound by residues arginine 182, histidine 189, 203–206 (FGSN), arginine 216, and tyrosine 295.

This sequence belongs to the NAD(P)-dependent epimerase/dehydratase family. HldD subfamily. In terms of assembly, homopentamer. NADP(+) is required as a cofactor.

It carries out the reaction ADP-D-glycero-beta-D-manno-heptose = ADP-L-glycero-beta-D-manno-heptose. The protein operates within nucleotide-sugar biosynthesis; ADP-L-glycero-beta-D-manno-heptose biosynthesis; ADP-L-glycero-beta-D-manno-heptose from D-glycero-beta-D-manno-heptose 7-phosphate: step 4/4. Its pathway is bacterial outer membrane biogenesis; LOS core biosynthesis. Catalyzes the interconversion between ADP-D-glycero-beta-D-manno-heptose and ADP-L-glycero-beta-D-manno-heptose via an epimerization at carbon 6 of the heptose. The sequence is that of ADP-L-glycero-D-manno-heptose-6-epimerase from Neisseria gonorrhoeae.